The primary structure comprises 242 residues: Probable 2-phosphosulfolactate phosphatase (242 aa).

This sequence belongs to the ComB family. Mg(2+) is required as a cofactor.

It carries out the reaction (2R)-O-phospho-3-sulfolactate + H2O = (2R)-3-sulfolactate + phosphate. The sequence is that of Probable 2-phosphosulfolactate phosphatase from Caldicellulosiruptor saccharolyticus (strain ATCC 43494 / DSM 8903 / Tp8T 6331).